The primary structure comprises 246 residues: Mast cell protease 1 (246 aa).

The signal sequence occupies residues 1-18; that stretch reads MQALLFLLALLWPPEAGA. Positions 19-20 are cleaved as a propeptide — activation peptide; that stretch reads EE. The region spanning 21 to 244 is the Peptidase S1 domain; that stretch reads IIGGVESKPH…YVPWINLVIR (224 aa). Cysteines 50 and 66 form a disulfide. Active-site charge relay system residues include His-65 and Asp-109. 2 cysteine pairs are disulfide-bonded: Cys-143/Cys-208 and Cys-174/Cys-187. Ser-202 functions as the Charge relay system in the catalytic mechanism.

Belongs to the peptidase S1 family. Granzyme subfamily.

This chain is Mast cell protease 1, found in Meriones unguiculatus (Mongolian jird).